Here is a 296-residue protein sequence, read N- to C-terminus: MNNNVFHFPVLLDAICKLIEDLPVKSDLIYIDSTLGEGAHAKAILEKYDFLSLVGIERDSQILERAKQFLLIFKDRITYFNDWFDNFFANYPLNVKANFILVDLGISMFHYKDSKKGFSFLEDEPLDMRLCSSSCSISAAEIVNTFSKYDLESLIYNLSNEHYSRRISKAIVEYRKIKKIQTTKELQSIINKVYPFSKVKINPATKTFQALRIYVNDELARLKRSLPLWVENLAKDGILAIITFHSIEDRIVKDFFRSLSCDLYVKISKKPIIPSSDEIKKNKPSRSAKLRAVKKI.

Residues 38 to 40 (GAH), glutamate 57, phenylalanine 88, aspartate 103, and histidine 110 contribute to the S-adenosyl-L-methionine site.

Belongs to the methyltransferase superfamily. RsmH family.

It localises to the cytoplasm. It catalyses the reaction cytidine(1402) in 16S rRNA + S-adenosyl-L-methionine = N(4)-methylcytidine(1402) in 16S rRNA + S-adenosyl-L-homocysteine + H(+). In terms of biological role, specifically methylates the N4 position of cytidine in position 1402 (C1402) of 16S rRNA. This Borreliella afzelii (strain PKo) (Borrelia afzelii) protein is Ribosomal RNA small subunit methyltransferase H.